The primary structure comprises 262 residues: Thiamine thiazole synthase (262 aa).

NAD(+)-binding positions include serine 40, 59–60, glycine 67, valine 133, and 159–161; these read ER and HID. Aspartate 161 and histidine 176 together coordinate Fe cation. NAD(+) is bound by residues serine 179 and methionine 226. Arginine 236 contacts glycine.

The protein belongs to the THI4 family. In terms of assembly, homooctamer; tetramer of dimers. The cofactor is Fe(2+).

The catalysed reaction is hydrogen sulfide + glycine + NAD(+) = ADP-5-ethyl-4-methylthiazole-2-carboxylate + nicotinamide + 3 H2O + H(+). It functions in the pathway cofactor biosynthesis; thiamine diphosphate biosynthesis. Its function is as follows. Involved in the biosynthesis of the thiazole moiety of thiamine. Catalyzes the conversion of NAD and glycine to adenosine diphosphate 5-(2-hydroxyethyl)-4-methylthiazole-2-carboxylate (ADT), an adenylated thiazole intermediate, using free sulfide as a source of sulfur. The polypeptide is Thiamine thiazole synthase (Methanococcus maripaludis (strain C7 / ATCC BAA-1331)).